Here is a 152-residue protein sequence, read N- to C-terminus: Phospholipase A2 pkP2 (152 aa).

The signal sequence occupies residues 1–21; that stretch reads MNPAHLLVLLAVCVSLLGASA. Positions 22–27 are excised as a propeptide; sequence IPPLPL. 7 disulfides stabilise this stretch: C38–C104, C54–C151, C56–C72, C71–C132, C78–C125, C88–C118, and C111–C123. Residues Y55, G57, and G59 each contribute to the Ca(2+) site. H75 is an active-site residue. D76 contacts Ca(2+). D126 is an active-site residue.

Belongs to the phospholipase A2 family. Group I subfamily. Ca(2+) is required as a cofactor.

Its subcellular location is the secreted. The enzyme catalyses a 1,2-diacyl-sn-glycero-3-phosphocholine + H2O = a 1-acyl-sn-glycero-3-phosphocholine + a fatty acid + H(+). Functionally, PA2 catalyzes the calcium-dependent hydrolysis of the 2-acyl groups in 3-sn-phosphoglycerides. This Laticauda semifasciata (Black-banded sea krait) protein is Phospholipase A2 pkP2.